A 1158-amino-acid chain; its full sequence is ATP-dependent helicase/deoxyribonuclease subunit B (1158 aa).

The UvrD-like helicase ATP-binding domain maps to 1–275 (MTLHAYLGRA…QYFNQLYRFN (275 aa)). Position 8–15 (8–15 (GRAGTGKS)) interacts with ATP. The UvrD-like helicase C-terminal domain occupies 269–583 (NQLYRFNNQD…SIGTMDLAKV (315 aa)). C784, C1112, C1115, and C1121 together coordinate [4Fe-4S] cluster.

Belongs to the helicase family. AddB/RexB type 1 subfamily. Heterodimer of AddA and AddB. It depends on Mg(2+) as a cofactor. The cofactor is [4Fe-4S] cluster.

Functionally, the heterodimer acts as both an ATP-dependent DNA helicase and an ATP-dependent, dual-direction single-stranded exonuclease. Recognizes the chi site generating a DNA molecule suitable for the initiation of homologous recombination. The AddB subunit has 5' -&gt; 3' nuclease activity but not helicase activity. The polypeptide is ATP-dependent helicase/deoxyribonuclease subunit B (Staphylococcus aureus (strain COL)).